The chain runs to 717 residues: Fatty acid oxidation complex subunit alpha (717 aa).

An enoyl-CoA hydratase/isomerase region spans residues 1–190 (MIHAGNAITV…KDGAVDAVVA (190 aa)). D298 contacts substrate. A 3-hydroxyacyl-CoA dehydrogenase region spans residues 313–717 (HPVNQAAVLG…MAANNKKFYG (405 aa)). Residues M326, D345, 402 to 404 (VTE), K409, and S431 contribute to the NAD(+) site. H452 serves as the catalytic For 3-hydroxyacyl-CoA dehydrogenase activity. N455 lines the NAD(+) pocket. Residue N502 participates in substrate binding.

In the N-terminal section; belongs to the enoyl-CoA hydratase/isomerase family. This sequence in the C-terminal section; belongs to the 3-hydroxyacyl-CoA dehydrogenase family. As to quaternary structure, heterotetramer of two alpha chains (FadB) and two beta chains (FadA).

The enzyme catalyses a (3S)-3-hydroxyacyl-CoA + NAD(+) = a 3-oxoacyl-CoA + NADH + H(+). It carries out the reaction a (3S)-3-hydroxyacyl-CoA = a (2E)-enoyl-CoA + H2O. The catalysed reaction is a 4-saturated-(3S)-3-hydroxyacyl-CoA = a (3E)-enoyl-CoA + H2O. It catalyses the reaction (3S)-3-hydroxybutanoyl-CoA = (3R)-3-hydroxybutanoyl-CoA. The enzyme catalyses a (3Z)-enoyl-CoA = a 4-saturated (2E)-enoyl-CoA. It carries out the reaction a (3E)-enoyl-CoA = a 4-saturated (2E)-enoyl-CoA. It functions in the pathway lipid metabolism; fatty acid beta-oxidation. Involved in the aerobic and anaerobic degradation of long-chain fatty acids via beta-oxidation cycle. Catalyzes the formation of 3-oxoacyl-CoA from enoyl-CoA via L-3-hydroxyacyl-CoA. It can also use D-3-hydroxyacyl-CoA and cis-3-enoyl-CoA as substrate. The chain is Fatty acid oxidation complex subunit alpha from Acinetobacter baumannii (strain SDF).